The chain runs to 101 residues: Feather keratin Cos1-1/Cos1-3/Cos2-1 (101 aa).

Residue S2 is modified to N-acetylserine.

The protein belongs to the avian keratin family. The avian keratins (F-ker, S-ker, C-ker and B-ker) are a complex mixture of very similar polypeptides.

The polypeptide is Feather keratin Cos1-1/Cos1-3/Cos2-1 (Columba livia (Rock dove)).